The chain runs to 132 residues: Small ribosomal subunit protein uS8 (132 aa).

It belongs to the universal ribosomal protein uS8 family. Part of the 30S ribosomal subunit. Contacts proteins S5 and S12.

One of the primary rRNA binding proteins, it binds directly to 16S rRNA central domain where it helps coordinate assembly of the platform of the 30S subunit. The polypeptide is Small ribosomal subunit protein uS8 (Caulobacter vibrioides (strain ATCC 19089 / CIP 103742 / CB 15) (Caulobacter crescentus)).